Reading from the N-terminus, the 200-residue chain is ATP synthase subunit s, mitochondrial (200 aa).

Residues 1–25 constitute a mitochondrion transit peptide; it reads MMMFGKISRQLCSLKKIPWSCDSRY. The tract at residues 1–61 is N-terminal domain; that stretch reads MMMFGKISRQ…SEWLLRCGAK (61 aa). Glycine 59 is a Mg(2+) binding site. LRR repeat units follow at residues 62 to 87, 88 to 116, 117 to 141, and 142 to 173; these read VRYC…RYKI, QAID…KITL, CKCH…KSLL, and ELEI…LSDL. Residue threonine 93 participates in Mg(2+) binding.

The protein belongs to the ATP synthase subunit s family. Homotetramer. Associates with ATP synthase.

It is found in the mitochondrion. The protein localises to the mitochondrion inner membrane. Involved in regulation of mitochondrial membrane ATP synthase. Necessary for H(+) conduction of ATP synthase. Facilitates energy-driven catalysis of ATP synthesis by blocking a proton leak through an alternative proton exit pathway. The chain is ATP synthase subunit s, mitochondrial (Dmac2l) from Mus musculus (Mouse).